Here is a 116-residue protein sequence, read N- to C-terminus: Small ribosomal subunit protein bS18c (116 aa).

Over residues 1 to 13 the composition is skewed to polar residues; the sequence is MKPSFRNTSPSFR. The tract at residues 1–51 is disordered; the sequence is MKPSFRNTSPSFRNRSKPYFRNRSKPYFRNRSKPSFRNTSKRFSPNQQSFR. The segment covering 14–34 has biased composition (basic residues); it reads NRSKPYFRNRSKPYFRNRSKP. The span at 35–49 shows a compositional bias: polar residues; it reads SFRNTSKRFSPNQQS.

It belongs to the bacterial ribosomal protein bS18 family. In terms of assembly, part of the 30S ribosomal subunit.

The protein resides in the plastid. It is found in the chloroplast. This Cryptomeria japonica (Japanese cedar) protein is Small ribosomal subunit protein bS18c.